The primary structure comprises 213 residues: RNA chaperone ProQ (213 aa).

The tract at residues 105 to 150 (ESQEKAKAKRAAQTPKAAPAGKAPAKKAPKKVAVPARKTERPAKAA) is disordered. Low complexity predominate over residues 115–127 (AAQTPKAAPAGKA).

This sequence belongs to the ProQ family.

The protein localises to the cytoplasm. Functionally, RNA chaperone with significant RNA binding, RNA strand exchange and RNA duplexing activities. The chain is RNA chaperone ProQ from Shewanella oneidensis (strain ATCC 700550 / JCM 31522 / CIP 106686 / LMG 19005 / NCIMB 14063 / MR-1).